Consider the following 483-residue polypeptide: MTTRTVQRNLWASAAVVLVLLLLWTDTTGGYFAAIDETETSKNCFCELEGSINDCSCDVDTVDHFNNMKIYPRLQSLLVKNFFRFYKVNLRQECPFWPDDSRCAMRFCQVENCEEQAIPQGIKDKGEHKEKAAFKYTREAQVGGSACSDGEDFDSSLGFLDTSISDQAHREFELWAKHDEAEEDFCIVDDHEEGSQYVDLLLNPERYTGYKGESAHRIWKSIYLENCFGGNNETANKFSNYVPHLDLRNVCLEQRAFYRIISGLHSSINIHLCSKYLLSESKDFLDPQGIWGPNVKEFKRRFSPETTSGEGPHWLRNLYFIYLIELRALAKAAPYLRREDYYTGIAEEDDEVKLAINDMLSVIENFQSHFDENALFSNGIASIKFKHDYKEKFRNISRIMSCVGCDKCKLWGKLQTQGLGTALKILYSEKLNLATESGLWDKPHIEADPIFRLSRTEIVALFNAFGRLSNSIYEMENFRCVLR.

Positions 1 to 29 (MTTRTVQRNLWASAAVVLVLLLLWTDTTG) are cleaved as a signal peptide. 6 cysteine pairs are disulfide-bonded: C44-C57, C46-C55, C94-C402, C103-C108, C227-C251, and C405-C408. R206, T208, and W219 together coordinate FAD. Residue N232 is glycosylated (N-linked (GlcNAc...) asparagine). FAD-binding residues include S262, H265, and R301. The N-linked (GlcNAc...) asparagine glycan is linked to N395.

It belongs to the EROs family. May function both as a monomer and a homodimer. FAD serves as cofactor.

The protein resides in the endoplasmic reticulum membrane. Functionally, oxidoreductase involved in disulfide bond formation in the endoplasmic reticulum. Efficiently reoxidizes pdi-1, the enzyme catalyzing protein disulfide formation, in order to allow pdi-1 to sustain additional rounds of disulfide formation. Following pdi reoxidation, passes its electrons to molecular oxygen via FAD, leading to the production of reactive oxygen species (ROS) in the cell. The chain is Ero1-like protein (Ero1L) from Drosophila melanogaster (Fruit fly).